A 334-amino-acid chain; its full sequence is Glyceraldehyde-3-phosphate dehydrogenase (334 aa).

Residues 12–13 (TI) and Gly-111 contribute to the NAD(+) site. 140 to 142 (SCN) lines the D-glyceraldehyde 3-phosphate pocket. The active-site Nucleophile is Cys-141. Arg-167 lines the NAD(+) pocket. 192 to 193 (HG) contacts D-glyceraldehyde 3-phosphate. Position 298 (Gln-298) interacts with NAD(+).

It belongs to the glyceraldehyde-3-phosphate dehydrogenase family. Homotetramer.

It is found in the cytoplasm. It carries out the reaction D-glyceraldehyde 3-phosphate + phosphate + NADP(+) = (2R)-3-phospho-glyceroyl phosphate + NADPH + H(+). It catalyses the reaction D-glyceraldehyde 3-phosphate + phosphate + NAD(+) = (2R)-3-phospho-glyceroyl phosphate + NADH + H(+). The protein operates within carbohydrate degradation; glycolysis; pyruvate from D-glyceraldehyde 3-phosphate: step 1/5. This is Glyceraldehyde-3-phosphate dehydrogenase from Thermococcus kodakarensis (strain ATCC BAA-918 / JCM 12380 / KOD1) (Pyrococcus kodakaraensis (strain KOD1)).